We begin with the raw amino-acid sequence, 354 residues long: Photosystem II D2 protein (354 aa).

Threonine 2 carries the post-translational modification N-acetylthreonine. Threonine 2 carries the phosphothreonine modification. A helical transmembrane segment spans residues 42-62 (CAYFALGGWFTGTTFVTSWYT). A chlorophyll a-binding site is contributed by histidine 119. The helical transmembrane segment at 126–142 (GFMLRQFELARSVQLRP) threads the bilayer. Residues glutamine 131 and asparagine 144 each coordinate pheophytin a. The helical transmembrane segment at 154 to 167 (VFVSVFLIYPLGQS) threads the bilayer. Histidine 199 is a binding site for chlorophyll a. A helical transmembrane segment spans residues 209 to 229 (AALLCAIHGATVENTLFEDGD). Histidine 216 and phenylalanine 263 together coordinate a plastoquinone. Histidine 216 contributes to the Fe cation binding site. Histidine 270 is a binding site for Fe cation. Residues 280–296 (GLWMSALGVVGLALNLR) form a helical membrane-spanning segment.

The protein belongs to the reaction center PufL/M/PsbA/D family. PSII is composed of 1 copy each of membrane proteins PsbA, PsbB, PsbC, PsbD, PsbE, PsbF, PsbH, PsbI, PsbJ, PsbK, PsbL, PsbM, PsbT, PsbX, PsbY, PsbZ, Psb30/Ycf12, at least 3 peripheral proteins of the oxygen-evolving complex and a large number of cofactors. It forms dimeric complexes. The D1/D2 heterodimer binds P680, chlorophylls that are the primary electron donor of PSII, and subsequent electron acceptors. It shares a non-heme iron and each subunit binds pheophytin, quinone, additional chlorophylls, carotenoids and lipids. There is also a Cl(-1) ion associated with D1 and D2, which is required for oxygen evolution. The PSII complex binds additional chlorophylls, carotenoids and specific lipids. is required as a cofactor.

The protein localises to the plastid. It is found in the chloroplast thylakoid membrane. It catalyses the reaction 2 a plastoquinone + 4 hnu + 2 H2O = 2 a plastoquinol + O2. Functionally, photosystem II (PSII) is a light-driven water:plastoquinone oxidoreductase that uses light energy to abstract electrons from H(2)O, generating O(2) and a proton gradient subsequently used for ATP formation. It consists of a core antenna complex that captures photons, and an electron transfer chain that converts photonic excitation into a charge separation. The D1/D2 (PsbA/PsbD) reaction center heterodimer binds P680, the primary electron donor of PSII as well as several subsequent electron acceptors. D2 is needed for assembly of a stable PSII complex. In Piper cenocladum (Ant piper), this protein is Photosystem II D2 protein.